A 163-amino-acid chain; its full sequence is Lipoprotein signal peptidase (163 aa).

3 helical membrane-spanning segments follow: residues 11 to 31 (ILIA…IATT), 64 to 84 (MTFF…FFIN), and 88 to 108 (YNLF…GNFI). Residues Asp-118 and Asp-136 contribute to the active site. Residues 131-151 (IFNIADSSLTIGVILIIIALL) traverse the membrane as a helical segment.

The protein belongs to the peptidase A8 family.

The protein resides in the cell membrane. The catalysed reaction is Release of signal peptides from bacterial membrane prolipoproteins. Hydrolyzes -Xaa-Yaa-Zaa-|-(S,diacylglyceryl)Cys-, in which Xaa is hydrophobic (preferably Leu), and Yaa (Ala or Ser) and Zaa (Gly or Ala) have small, neutral side chains.. Its pathway is protein modification; lipoprotein biosynthesis (signal peptide cleavage). In terms of biological role, this protein specifically catalyzes the removal of signal peptides from prolipoproteins. In Staphylococcus aureus (strain bovine RF122 / ET3-1), this protein is Lipoprotein signal peptidase.